A 339-amino-acid chain; its full sequence is Fructose-1,6-bisphosphatase isozyme 2 (339 aa).

Residues 3-10 (DRSPFETD) are important for interaction with ALDOA. AMP is bound by residues valine 18 and 28–32 (TGELT). Mg(2+) contacts are provided by aspartate 69 and glutamate 98. 113–114 (KY) contributes to the AMP binding site. Residues aspartate 119, leucine 121, and aspartate 122 each contribute to the Mg(2+) site. Position 122 (aspartate 122) interacts with substrate. Residue arginine 141 participates in AMP binding. Positions 204-208 (KKKGK) match the Nuclear localization signal motif. 213 to 216 (NEGY) contacts substrate. 2 positions are modified to phosphotyrosine: tyrosine 216 and tyrosine 219. Substrate contacts are provided by residues 245–249 (YVGSM), tyrosine 265, and lysine 275. Glutamate 281 is a Mg(2+) binding site.

The protein belongs to the FBPase class 1 family. In terms of assembly, homotetramer. Interacts with ALDOA; the interaction blocks inhibition by physiological concentrations of AMP and reduces inhibition by Ca(2+). Interacts with alpha-actinin and F-actin. Requires Mg(2+) as cofactor. Expressed in muscle, intestine, brain and placenta and very weakly in liver.

The protein resides in the cell junction. Its subcellular location is the cytoplasm. The protein localises to the nucleus. It is found in the myofibril. It localises to the sarcomere. The protein resides in the z line. It catalyses the reaction beta-D-fructose 1,6-bisphosphate + H2O = beta-D-fructose 6-phosphate + phosphate. It participates in carbohydrate biosynthesis; gluconeogenesis. Subject to complex allosteric regulation. The enzyme can assume an active R-state, or an inactive T-state. Intermediate conformations may exist. AMP acts as an allosteric inhibitor. Fructose 2,6-bisphosphate acts as a competitive inhibitor. Strongly inhibited by Ca(2+). Catalyzes the hydrolysis of fructose 1,6-bisphosphate to fructose 6-phosphate in the presence of divalent cations and probably participates in glycogen synthesis from carbohydrate precursors, such as lactate. This chain is Fructose-1,6-bisphosphatase isozyme 2 (Fbp2), found in Mus musculus (Mouse).